We begin with the raw amino-acid sequence, 126 residues long: Fluoride-specific ion channel FluC 2 (126 aa).

Transmembrane regions (helical) follow at residues 7-27 (MWVG…GLSI), 37-57 (LGTF…SILF), 65-85 (YGDL…TTFS), and 101-121 (AIAA…AAFG). The Na(+) site is built by glycine 79 and threonine 82.

The protein belongs to the fluoride channel Fluc/FEX (TC 1.A.43) family.

It localises to the cell inner membrane. It carries out the reaction fluoride(in) = fluoride(out). With respect to regulation, na(+) is not transported, but it plays an essential structural role and its presence is essential for fluoride channel function. Its function is as follows. Fluoride-specific ion channel. Important for reducing fluoride concentration in the cell, thus reducing its toxicity. This chain is Fluoride-specific ion channel FluC 2, found in Yersinia pseudotuberculosis serotype I (strain IP32953).